A 210-amino-acid polypeptide reads, in one-letter code: Tissue inhibitor of metalloproteinase (210 aa).

The first 27 residues, 1–27 (MDLRKHLGLLTLLLVAVFAFYGRPADA), serve as a signal peptide directing secretion. Zn(2+) is bound at residue Cys-28. Involved in metalloproteinase-binding stretches follow at residues 28-31 (CSCM) and 93-94 (DA). 5 disulfide bridges follow: Cys-28-Cys-96, Cys-30-Cys-118, Cys-145-Cys-195, Cys-150-Cys-155, and Cys-165-Cys-180. The NTR domain occupies 28–145 (CSCMPSHPQT…SGGYAKATNC (118 aa)).

It belongs to the protease inhibitor I35 (TIMP) family. As to expression, expressed in heads of female and male adult flies. Expressed at the time of eclosion in unopened wings of adult flies. Strongly expressed at the tip of ovarian germarium region 1 where germline stem cells (GSCs) and cystoblasts reside and in region 2 of the germarium.

The protein resides in the secreted. Its function is as follows. Metalloproteinase inhibitor that acts on both matrix metalloproteinases Mmp1 and Mmp2 in vitro. Complexes with metalloproteinases and irreversibly inactivates them by binding to their catalytic zinc cofactor. Required for wing maturation which is the final step in morphogenesis of the adult fly. Involved in the negative regulation of developmental tissue invasion for imaginal disk eversion during metamorphosis by inhibiting Mmp-mediated basement membrane (BM) degradation. Required for oogenesis and for the long-term maintainance of germarial structure and shape in the adult ovaries. Required for maintaining composition and biophysical properties of the extracellular matrix (ECM), and for the normal organization and cyst production of the germline stem cell (GSC) niche. This is Tissue inhibitor of metalloproteinase from Drosophila melanogaster (Fruit fly).